A 432-amino-acid polypeptide reads, in one-letter code: Glutamyl-tRNA reductase (432 aa).

Substrate is bound by residues 55–58, Ser114, 119–121, and Gln125; these read TCNR and ETQ. Catalysis depends on Cys56, which acts as the Nucleophile. 194-199 is an NADP(+) binding site; the sequence is GAGEMI.

The protein belongs to the glutamyl-tRNA reductase family. In terms of assembly, homodimer.

It carries out the reaction (S)-4-amino-5-oxopentanoate + tRNA(Glu) + NADP(+) = L-glutamyl-tRNA(Glu) + NADPH + H(+). The protein operates within porphyrin-containing compound metabolism; protoporphyrin-IX biosynthesis; 5-aminolevulinate from L-glutamyl-tRNA(Glu): step 1/2. Functionally, catalyzes the NADPH-dependent reduction of glutamyl-tRNA(Glu) to glutamate 1-semialdehyde (GSA). In Burkholderia lata (strain ATCC 17760 / DSM 23089 / LMG 22485 / NCIMB 9086 / R18194 / 383), this protein is Glutamyl-tRNA reductase.